The chain runs to 854 residues: DNA mismatch repair protein MutS (854 aa).

ATP is bound at residue 615-622; the sequence is GPNMGGKS.

Belongs to the DNA mismatch repair MutS family.

In terms of biological role, this protein is involved in the repair of mismatches in DNA. It is possible that it carries out the mismatch recognition step. This protein has a weak ATPase activity. The protein is DNA mismatch repair protein MutS of Aliivibrio fischeri (strain ATCC 700601 / ES114) (Vibrio fischeri).